A 432-amino-acid chain; its full sequence is Enolase (432 aa).

Position 163 (glutamine 163) interacts with (2R)-2-phosphoglycerate. Residue glutamate 205 is the Proton donor of the active site. Mg(2+) contacts are provided by aspartate 241, glutamate 289, and aspartate 316. Residues lysine 341, arginine 370, serine 371, and lysine 392 each coordinate (2R)-2-phosphoglycerate. The active-site Proton acceptor is the lysine 341.

It belongs to the enolase family. Requires Mg(2+) as cofactor.

Its subcellular location is the cytoplasm. The protein resides in the secreted. The protein localises to the cell surface. The catalysed reaction is (2R)-2-phosphoglycerate = phosphoenolpyruvate + H2O. It participates in carbohydrate degradation; glycolysis; pyruvate from D-glyceraldehyde 3-phosphate: step 4/5. Functionally, catalyzes the reversible conversion of 2-phosphoglycerate (2-PG) into phosphoenolpyruvate (PEP). It is essential for the degradation of carbohydrates via glycolysis. In Treponema pallidum (strain Nichols), this protein is Enolase.